The sequence spans 404 residues: Glycerol-1-phosphate dehydrogenase [NAD(P)+] (404 aa).

NAD(+) is bound by residues D55, 117 to 121, and 139 to 142; these read GTVHD and TAPS. D144 provides a ligand contact to substrate. S148 is an NAD(+) binding site. D191 provides a ligand contact to substrate. D191 and H271 together coordinate Ni(2+). Substrate is bound at residue H275. A Ni(2+)-binding site is contributed by H291.

Belongs to the glycerol-1-phosphate dehydrogenase family. As to quaternary structure, homodimer. Ni(2+) serves as cofactor.

Its subcellular location is the cytoplasm. It catalyses the reaction sn-glycerol 1-phosphate + NAD(+) = dihydroxyacetone phosphate + NADH + H(+). The enzyme catalyses sn-glycerol 1-phosphate + NADP(+) = dihydroxyacetone phosphate + NADPH + H(+). Its function is as follows. Catalyzes the NAD(P)H-dependent reduction of dihydroxyacetonephosphate (DHAP or glycerone phosphate) to glycerol 1-phosphate (G1P). The G1P thus generated is probably used for the synthesis of phosphoglycerolipids in Gram-positive bacterial species. This chain is Glycerol-1-phosphate dehydrogenase [NAD(P)+], found in Geobacillus thermodenitrificans (strain NG80-2).